Reading from the N-terminus, the 659-residue chain is DNA mismatch repair protein MutL (659 aa).

It belongs to the DNA mismatch repair MutL/HexB family.

This protein is involved in the repair of mismatches in DNA. It is required for dam-dependent methyl-directed DNA mismatch repair. May act as a 'molecular matchmaker', a protein that promotes the formation of a stable complex between two or more DNA-binding proteins in an ATP-dependent manner without itself being part of a final effector complex. This Ligilactobacillus salivarius (strain UCC118) (Lactobacillus salivarius) protein is DNA mismatch repair protein MutL.